The chain runs to 502 residues: Sodium/proline symporter (502 aa).

Residues 1–5 (MAIST) lie on the Periplasmic side of the membrane. The chain crosses the membrane as a helical span at residues 6–26 (PMLVTFCVYIFGMILIGFIAW). At 27–41 (RSTKNFDDYILGGRS) the chain is on the cytoplasmic side. Hydrophilic stretches follow at residues 27-66 (RSTKNFDDYILGGRSLGPFVTALSAGASDMSGWLLMGLPG) and 88-124 (INWKLVAGRLRVHTEYNNNALTLPDYFTGRFEDKSRI). The chain crosses the membrane as a helical span at residues 42–62 (LGPFVTALSAGASDMSGWLLM). Residues 63–67 (GLPGA) lie on the Periplasmic side of the membrane. The helical transmembrane segment at 68–88 (VFLSGISESWIAIGLTLGAWI) threads the bilayer. Residues 89-126 (NWKLVAGRLRVHTEYNNNALTLPDYFTGRFEDKSRILR) lie on the Cytoplasmic side of the membrane. Residues 127-147 (IISALVILLFFTIYCASGIVA) form a helical membrane-spanning segment. At 148 to 162 (GARLFESTFGMSYET) the chain is on the periplasmic side. The hydrophilic stretch occupies residues 151-162 (LFESTFGMSYET). A helical membrane pass occupies residues 163–183 (ALWAGAAATILYTFIGGFLAV). Residues 184–192 (SWTDTVQAS) are Cytoplasmic-facing. A hydrophilic region spans residues 185 to 189 (WTDTV). The helical transmembrane segment at 193-213 (LMIFALILTPVIVIISVGGFG) threads the bilayer. Hydrophilic regions lie at residues 214–231 (DSLEVIKQKSIENVDMLK), 249–274 (FGQPHILARFMAADSHHSIVHARRIS), and 296–319 (FNDHPALAGAVNQNAERVFIELAQ). Residues 214–234 (DSLEVIKQKSIENVDMLKGLN) lie on the Periplasmic side of the membrane. The helical transmembrane segment at 235 to 255 (FVAIISLMGWGLGYFGQPHIL) threads the bilayer. Over 256 to 275 (ARFMAADSHHSIVHARRISM) the chain is Cytoplasmic. A helical transmembrane segment spans residues 276-296 (TWMILCLAGAVAVGFFGIAYF). Residues 297–319 (NDHPALAGAVNQNAERVFIELAQ) lie on the Periplasmic side of the membrane. Residues 320–340 (ILFNPWIAGILLSAILAAVMS) form a helical membrane-spanning segment. Topologically, residues 341 to 370 (TLSCQLLVCSSAITEDLYKAFLRKHASQKE) are cytoplasmic. Residues 341–370 (TLSCQLLVCSSAITEDLYKAFLRKHASQKE) are hydrophilic. The helical transmembrane segment at 371–391 (LVWVGRVMVLVVALVAIALAA) threads the bilayer. The Periplasmic segment spans residues 392–397 (NPENRV). Residues 392 to 397 (NPENRV) are hydrophilic. The helical transmembrane segment at 398-418 (LGLVSYAWAGFGAAFGPVVLF) threads the bilayer. Topologically, residues 419 to 427 (SVMWSRMTR) are cytoplasmic. 2 hydrophilic regions span residues 424 to 430 (RMTRNGA) and 446 to 448 (QFG). 2 helical membrane-spanning segments follow: residues 428 to 448 (NGALAGMIIGALTVIVWKQFG) and 449 to 469 (WLGLYEIIPGFIFGSIGIVVF). At 470-502 (SLLGKAPSAAMQKRFAEADAHYHSAPPSRLQES) the chain is on the cytoplasmic side. Positions 476–502 (PSAAMQKRFAEADAHYHSAPPSRLQES) are hydrophilic.

The protein belongs to the sodium:solute symporter (SSF) (TC 2.A.21) family. Has been isolated from inner membrane preparations as a homodimer.

The protein localises to the cell inner membrane. The enzyme catalyses L-proline(in) + Na(+)(in) = L-proline(out) + Na(+)(out). Activity is stimulated by phosphatidylethanolamine and phosphatidylglycerol, but not by phosphatidylcholine and cardiolipin. Proline uptake is inhibited by the sulfhydryl reagent N-ethylmaleimide (NEM). Proline, in the presence of Na(+) or Li(+), protects the carrier functions from NEM-inactivation. In terms of biological role, catalyzes the sodium-dependent uptake of extracellular L-proline. This protein is also capable of using lithium as the transport cation. Also catalyzes the uptake of propionate. The protein is Sodium/proline symporter (putP) of Escherichia coli (strain K12).